We begin with the raw amino-acid sequence, 118 residues long: Putative pterin-4-alpha-carbinolamine dehydratase (118 aa).

This sequence belongs to the pterin-4-alpha-carbinolamine dehydratase family.

The catalysed reaction is (4aS,6R)-4a-hydroxy-L-erythro-5,6,7,8-tetrahydrobiopterin = (6R)-L-erythro-6,7-dihydrobiopterin + H2O. The sequence is that of Putative pterin-4-alpha-carbinolamine dehydratase from Xanthomonas euvesicatoria pv. vesicatoria (strain 85-10) (Xanthomonas campestris pv. vesicatoria).